A 236-amino-acid chain; its full sequence is 2-C-methyl-D-erythritol 4-phosphate cytidylyltransferase (236 aa).

This sequence belongs to the IspD/TarI cytidylyltransferase family. IspD subfamily. As to quaternary structure, homodimer.

It catalyses the reaction 2-C-methyl-D-erythritol 4-phosphate + CTP + H(+) = 4-CDP-2-C-methyl-D-erythritol + diphosphate. It functions in the pathway isoprenoid biosynthesis; isopentenyl diphosphate biosynthesis via DXP pathway; isopentenyl diphosphate from 1-deoxy-D-xylulose 5-phosphate: step 2/6. Functionally, catalyzes the formation of 4-diphosphocytidyl-2-C-methyl-D-erythritol from CTP and 2-C-methyl-D-erythritol 4-phosphate (MEP). The sequence is that of 2-C-methyl-D-erythritol 4-phosphate cytidylyltransferase from Salmonella agona (strain SL483).